We begin with the raw amino-acid sequence, 368 residues long: DNA replication and repair protein RecF (368 aa).

30–37 contacts ATP; that stretch reads GDNGAGKT.

This sequence belongs to the RecF family.

It localises to the cytoplasm. Its function is as follows. The RecF protein is involved in DNA metabolism; it is required for DNA replication and normal SOS inducibility. RecF binds preferentially to single-stranded, linear DNA. It also seems to bind ATP. The protein is DNA replication and repair protein RecF of Xanthomonas oryzae pv. oryzae (strain KACC10331 / KXO85).